The sequence spans 230 residues: 5'-methylthioadenosine/S-adenosylhomocysteine nucleosidase (230 aa).

E12 (proton acceptor) is an active-site residue. Substrate is bound by residues G78, I152, and M173–E174. Residue D197 is the Proton donor of the active site.

It belongs to the PNP/UDP phosphorylase family. MtnN subfamily.

The catalysed reaction is S-adenosyl-L-homocysteine + H2O = S-(5-deoxy-D-ribos-5-yl)-L-homocysteine + adenine. It catalyses the reaction S-methyl-5'-thioadenosine + H2O = 5-(methylsulfanyl)-D-ribose + adenine. The enzyme catalyses 5'-deoxyadenosine + H2O = 5-deoxy-D-ribose + adenine. Its pathway is amino-acid biosynthesis; L-methionine biosynthesis via salvage pathway; S-methyl-5-thio-alpha-D-ribose 1-phosphate from S-methyl-5'-thioadenosine (hydrolase route): step 1/2. Its function is as follows. Catalyzes the irreversible cleavage of the glycosidic bond in both 5'-methylthioadenosine (MTA) and S-adenosylhomocysteine (SAH/AdoHcy) to adenine and the corresponding thioribose, 5'-methylthioribose and S-ribosylhomocysteine, respectively. Also cleaves 5'-deoxyadenosine, a toxic by-product of radical S-adenosylmethionine (SAM) enzymes, into 5-deoxyribose and adenine. This is 5'-methylthioadenosine/S-adenosylhomocysteine nucleosidase from Haemophilus influenzae (strain 86-028NP).